The primary structure comprises 360 residues: Phospho-N-acetylmuramoyl-pentapeptide-transferase (360 aa).

The next 10 membrane-spanning stretches (helical) occupy residues 26–46, 73–93, 97–117, 132–152, 168–188, 199–219, 236–256, 263–283, 288–308, and 338–358; these read AILG…KMIA, TMGG…WGDL, YVWV…IDDY, WKYL…YASA, VMPQ…VGSS, GLAI…AYLS, AGEL…FLWF, VFMG…IAVL, ILLV…ILQV, and VIVR…ATLK.

This sequence belongs to the glycosyltransferase 4 family. MraY subfamily. Requires Mg(2+) as cofactor.

It localises to the cell inner membrane. The enzyme catalyses UDP-N-acetyl-alpha-D-muramoyl-L-alanyl-gamma-D-glutamyl-meso-2,6-diaminopimeloyl-D-alanyl-D-alanine + di-trans,octa-cis-undecaprenyl phosphate = di-trans,octa-cis-undecaprenyl diphospho-N-acetyl-alpha-D-muramoyl-L-alanyl-D-glutamyl-meso-2,6-diaminopimeloyl-D-alanyl-D-alanine + UMP. It participates in cell wall biogenesis; peptidoglycan biosynthesis. Functionally, catalyzes the initial step of the lipid cycle reactions in the biosynthesis of the cell wall peptidoglycan: transfers peptidoglycan precursor phospho-MurNAc-pentapeptide from UDP-MurNAc-pentapeptide onto the lipid carrier undecaprenyl phosphate, yielding undecaprenyl-pyrophosphoryl-MurNAc-pentapeptide, known as lipid I. The polypeptide is Phospho-N-acetylmuramoyl-pentapeptide-transferase (Shewanella halifaxensis (strain HAW-EB4)).